Here is a 110-residue protein sequence, read N- to C-terminus: Cytochrome c6 (110 aa).

A signal peptide spans Met1 to Ala25. Residues Cys39, Cys42, His43, and Met83 each coordinate heme c.

Belongs to the cytochrome c family. PetJ subfamily. Monomer. In terms of processing, binds 1 heme c group covalently per subunit.

It localises to the plastid. Its subcellular location is the chloroplast thylakoid lumen. Functionally, functions as an electron carrier between membrane-bound cytochrome b6-f and photosystem I in oxygenic photosynthesis. In Porphyra purpurea (Red seaweed), this protein is Cytochrome c6 (petJ).